We begin with the raw amino-acid sequence, 864 residues long: Leucine--tRNA ligase (864 aa).

Residues 42–52 (PYPSGKLHMGH) carry the 'HIGH' region motif. The 'KMSKS' region motif lies at 624-628 (KMSKS). Lys-627 contacts ATP.

It belongs to the class-I aminoacyl-tRNA synthetase family.

The protein localises to the cytoplasm. It carries out the reaction tRNA(Leu) + L-leucine + ATP = L-leucyl-tRNA(Leu) + AMP + diphosphate. In Burkholderia thailandensis (strain ATCC 700388 / DSM 13276 / CCUG 48851 / CIP 106301 / E264), this protein is Leucine--tRNA ligase.